Consider the following 751-residue polypeptide: Polyadenylate-binding protein, cytoplasmic and nuclear (751 aa).

Composition is skewed to polar residues over residues 1 to 26 (MSAE…NPAA) and 36 to 50 (ESAS…NQPH). Positions 1–50 (MSAEVSTTPAADNTVNGTPEATNPAATSAPEVTAVESASPSATPSANQPH) are disordered. 4 RRM domains span residues 52 to 130 (ASLY…WSQR), 140 to 217 (GNVF…HHIS), 233 to 310 (TNVY…RAQK), and 336 to 458 (VNLY…LAQR). Disordered regions lie at residues 371 to 413 (TVTA…KKTE) and 601 to 643 (GQGM…REEV). Positions 379 to 413 (ESEKEKESNKENEKEGEEKTEEKPKESEEEAKKTE) are enriched in basic and acidic residues. Gly residues predominate over residues 603 to 629 (GMRGPGYGQGRGGAPVQGGPRPQGGRG). Positions 646 to 723 (TGGLTAQTLN…ALSVYDEYMK (78 aa)) constitute a PABC domain. The tract at residues 725–751 (KGEGEAPAEPAKPKEDAAETATEENKS) is disordered. The span at 735–751 (AKPKEDAAETATEENKS) shows a compositional bias: basic and acidic residues.

This sequence belongs to the polyadenylate-binding protein type-1 family.

Its subcellular location is the cytoplasm. The protein localises to the nucleus. In terms of biological role, binds the poly(A) tail of mRNA. Appears to be an important mediator of the multiple roles of the poly(A) tail in mRNA biogenesis, stability and translation. In the nucleus, involved in both mRNA cleavage and polyadenylation. Is also required for efficient mRNA export to the cytoplasm. Acts in concert with a poly(A)-specific nuclease (PAN) to affect poly(A) tail shortening, which may occur concomitantly with either nucleocytoplasmic mRNA transport or translational initiation. In the cytoplasm, stimulates translation initiation and regulates mRNA decay through translation termination-coupled poly(A) shortening, probably mediated by PAN. The chain is Polyadenylate-binding protein, cytoplasmic and nuclear (pab1) from Neosartorya fischeri (strain ATCC 1020 / DSM 3700 / CBS 544.65 / FGSC A1164 / JCM 1740 / NRRL 181 / WB 181) (Aspergillus fischerianus).